A 540-amino-acid chain; its full sequence is Chaperonin GroEL 1 (540 aa).

Residues 29 to 32, 86 to 90, G413, 477 to 479, and D493 contribute to the ATP site; these read TLGP, DGTTT, and NAA.

Belongs to the chaperonin (HSP60) family. Forms a cylinder of 14 subunits composed of two heptameric rings stacked back-to-back. Interacts with the co-chaperonin GroES.

The protein localises to the cytoplasm. It carries out the reaction ATP + H2O + a folded polypeptide = ADP + phosphate + an unfolded polypeptide.. In terms of biological role, together with its co-chaperonin GroES, plays an essential role in assisting protein folding. The GroEL-GroES system forms a nano-cage that allows encapsulation of the non-native substrate proteins and provides a physical environment optimized to promote and accelerate protein folding. The sequence is that of Chaperonin GroEL 1 from Salinispora arenicola (strain CNS-205).